Here is a 575-residue protein sequence, read N- to C-terminus: V-type ATP synthase alpha chain (575 aa).

238 to 245 (GPFGAGKT) contributes to the ATP binding site.

Belongs to the ATPase alpha/beta chains family.

It carries out the reaction ATP + H2O + 4 H(+)(in) = ADP + phosphate + 5 H(+)(out). In terms of biological role, produces ATP from ADP in the presence of a proton gradient across the membrane. The V-type alpha chain is a catalytic subunit. This Borreliella afzelii (strain PKo) (Borrelia afzelii) protein is V-type ATP synthase alpha chain.